A 318-amino-acid chain; its full sequence is Ribosomal RNA small subunit methyltransferase H (318 aa).

Residues 38–40, D57, L91, D105, and Q112 contribute to the S-adenosyl-L-methionine site; that span reads AGH.

It belongs to the methyltransferase superfamily. RsmH family.

The protein resides in the cytoplasm. The catalysed reaction is cytidine(1402) in 16S rRNA + S-adenosyl-L-methionine = N(4)-methylcytidine(1402) in 16S rRNA + S-adenosyl-L-homocysteine + H(+). Functionally, specifically methylates the N4 position of cytidine in position 1402 (C1402) of 16S rRNA. This chain is Ribosomal RNA small subunit methyltransferase H, found in Clavibacter michiganensis subsp. michiganensis (strain NCPPB 382).